The primary structure comprises 138 residues: Nucleoside diphosphate kinase (138 aa).

ATP contacts are provided by Lys-9, Phe-57, Arg-85, Thr-91, Arg-102, and Asn-112. His-115 (pros-phosphohistidine intermediate) is an active-site residue.

The protein belongs to the NDK family. Homotetramer. Mg(2+) is required as a cofactor.

It is found in the cytoplasm. It catalyses the reaction a 2'-deoxyribonucleoside 5'-diphosphate + ATP = a 2'-deoxyribonucleoside 5'-triphosphate + ADP. It carries out the reaction a ribonucleoside 5'-diphosphate + ATP = a ribonucleoside 5'-triphosphate + ADP. Major role in the synthesis of nucleoside triphosphates other than ATP. The ATP gamma phosphate is transferred to the NDP beta phosphate via a ping-pong mechanism, using a phosphorylated active-site intermediate. The chain is Nucleoside diphosphate kinase from Lawsonia intracellularis (strain PHE/MN1-00).